Here is a 209-residue protein sequence, read N- to C-terminus: Putative tripartite motif-containing protein 61 (209 aa).

The segment at 16–57 (CPICLDYLKDPVTISCGHNFCLSCIIMSWKDLHDSFPCPFCH) adopts an RING-type zinc-finger fold. The segment at 92–133 (EEKHVCKKHNQVLTFFCQKDLELLCPRCSLSTDHQHHCVWPI) adopts a B box-type zinc-finger fold. Positions 97, 100, 119, and 125 each coordinate Zn(2+).

This is Putative tripartite motif-containing protein 61 (TRIM61) from Homo sapiens (Human).